The following is a 401-amino-acid chain: MTERVVLAYSGGLDTSVCIGWITEQTGAEVIAVAVDVGQGEDMEVIRKRALACGAVEAEVIDARAEFAADYCVPALRANALYMGRYPLISALSRPLIDKHLVAAAHRHKATAVAHGSTGKGNDQVRFEVGIGSLDPELRILAPVRDSGMTRDRAIAFAEAKGLPIEVTKKSPYSIDANLWGRAIETGFLEDIWNAPIEEIYAYTADPAVPRPADEVVVSFSDGVPVAIDGRPVSPLEAITELNRRAGAQGVGRIDLVEDRLVGIKSREVYEAPGAVALITAHQELENVTVERDLARFKRLVDQRWAELVYDGLWFSPLKRALDAFIDTAQRHVTGDIRLVLHGGRAVVTGRRSPQALYDYRLATYDTGDLFDQSLAKGFVELWGLPSRTAARRDLAAGAGE.

An ATP-binding site is contributed by 8-16 (AYSGGLDTS). Tyrosine 86 is a binding site for L-citrulline. Glycine 116 contacts ATP. L-aspartate-binding residues include threonine 118, asparagine 122, and aspartate 123. Position 122 (asparagine 122) interacts with L-citrulline. Arginine 126, serine 174, glutamate 258, and tyrosine 270 together coordinate L-citrulline.

The protein belongs to the argininosuccinate synthase family. Type 1 subfamily. Homotetramer.

Its subcellular location is the cytoplasm. The enzyme catalyses L-citrulline + L-aspartate + ATP = 2-(N(omega)-L-arginino)succinate + AMP + diphosphate + H(+). It functions in the pathway amino-acid biosynthesis; L-arginine biosynthesis; L-arginine from L-ornithine and carbamoyl phosphate: step 2/3. The sequence is that of Argininosuccinate synthase from Acidothermus cellulolyticus (strain ATCC 43068 / DSM 8971 / 11B).